We begin with the raw amino-acid sequence, 734 residues long: Putative K(+)-stimulated pyrophosphate-energized sodium pump (734 aa).

The next 5 membrane-spanning stretches (helical) occupy residues 3–23 (SILF…AYYF), 58–78 (IVGC…YGFH), 82–102 (VWVP…GFLG), 134–154 (VMGL…YLLL), and 169–189 (LCVI…QALF). K199 is a binding site for substrate. Residues D202, D206, N229, and D232 each contribute to the Mg(2+) site. 7 helical membrane-spanning segments follow: residues 244–264 (LYES…AAFI), 275–295 (AVIA…IGIF), 314–334 (FGTN…LWLL), 336–356 (LDNW…GIVI), 377–397 (SGKT…MLST), 398–418 (AIPV…ASGF), and 423–443 (VGMG…TLGI). D455 provides a ligand contact to Mg(2+). A run of 4 helical transmembrane segments spans residues 491 to 511 (FAIG…IEEI), 557 to 577 (GMFL…NAVG), 629 to 649 (ILAP…GLLI), and 650 to 670 (GGLS…GAWD). Positions 670, 696, and 700 each coordinate Ca(2+). Position 703 (K703) interacts with substrate. Residues 712-732 (ILIKLMSMVAIVMAGLTVAWS) form a helical membrane-spanning segment.

Belongs to the H(+)-translocating pyrophosphatase (TC 3.A.10) family. K(+)-stimulated subfamily. Homodimer. Mg(2+) is required as a cofactor.

It localises to the cell inner membrane. The catalysed reaction is Na(+)(in) + diphosphate + H2O = Na(+)(out) + 2 phosphate + H(+). Its activity is regulated as follows. Requires K(+) for maximal activity. In terms of biological role, sodium pump that utilizes the energy of pyrophosphate hydrolysis as the driving force for Na(+) movement across the membrane. This chain is Putative K(+)-stimulated pyrophosphate-energized sodium pump, found in Bacteroides thetaiotaomicron (strain ATCC 29148 / DSM 2079 / JCM 5827 / CCUG 10774 / NCTC 10582 / VPI-5482 / E50).